The sequence spans 753 residues: Catalase-peroxidase (753 aa).

Residues 90–238 (WHSAGTYRVT…LASSHMGLIY (149 aa)) constitute a cross-link (tryptophyl-tyrosyl-methioninium (Trp-Tyr) (with M-264)). The Proton acceptor role is filled by H91. Positions 196 to 220 (SEGQEGHEGHGVVQGDESKKQHTDI) are disordered. The segment at residues 238-264 (YVNPEGPDGIPDPVASAKDIRVTFGRM) is a cross-link (tryptophyl-tyrosyl-methioninium (Tyr-Met) (with W-90)). Heme b is bound at residue H279.

The protein belongs to the peroxidase family. Peroxidase/catalase subfamily. In terms of assembly, homodimer or homotetramer. Requires heme b as cofactor. Formation of the three residue Trp-Tyr-Met cross-link is important for the catalase, but not the peroxidase activity of the enzyme.

The protein localises to the cytoplasm. It carries out the reaction H2O2 + AH2 = A + 2 H2O. The enzyme catalyses 2 H2O2 = O2 + 2 H2O. With respect to regulation, inhibited by KCN. In terms of biological role, bifunctional enzyme with both catalase and broad-spectrum peroxidase activity. This chain is Catalase-peroxidase, found in Neurospora crassa (strain ATCC 24698 / 74-OR23-1A / CBS 708.71 / DSM 1257 / FGSC 987).